Here is a 202-residue protein sequence, read N- to C-terminus: Small ribosomal subunit protein uS4 (202 aa).

The tract at residues 17 to 42 (ELPGLSRKTPRRAYPPGQHGQARKKR) is disordered. The 63-residue stretch at 90 to 152 (MRLDNTIFRL…DASRKLIETH (63 aa)) folds into the S4 RNA-binding domain.

This sequence belongs to the universal ribosomal protein uS4 family. As to quaternary structure, part of the 30S ribosomal subunit. Contacts protein S5. The interaction surface between S4 and S5 is involved in control of translational fidelity.

Functionally, one of the primary rRNA binding proteins, it binds directly to 16S rRNA where it nucleates assembly of the body of the 30S subunit. Its function is as follows. With S5 and S12 plays an important role in translational accuracy. This Acaryochloris marina (strain MBIC 11017) protein is Small ribosomal subunit protein uS4.